We begin with the raw amino-acid sequence, 181 residues long: Large ribosomal subunit protein bL19 (181 aa).

Basic and acidic residues predominate over residues 162-173 (EKKAAAEAEAAK). The disordered stretch occupies residues 162–181 (EKKAAAEAEAAKAAEATPAE).

Belongs to the bacterial ribosomal protein bL19 family.

Its function is as follows. This protein is located at the 30S-50S ribosomal subunit interface and may play a role in the structure and function of the aminoacyl-tRNA binding site. The polypeptide is Large ribosomal subunit protein bL19 (Mesorhizobium japonicum (strain LMG 29417 / CECT 9101 / MAFF 303099) (Mesorhizobium loti (strain MAFF 303099))).